The primary structure comprises 548 residues: BTB/POZ domain-containing protein At5g17580 (548 aa).

The BTB domain maps to 7–74; it reads SDLHINVKGV…CNGSEFKFTS (68 aa). An NPH3 domain is found at 180–442; that stretch reads DWKSEDLITI…VNVLCVSQLQ (263 aa). Residue Tyr-383 is modified to Phosphotyrosine. Positions 442–493 form a coiled coil; sequence QIRDTVAKEIKGMEEKVDEEEEEEIEVSSDEDEMEKMSNKLLGLEIENDECV.

Belongs to the NPH3 family.

Its pathway is protein modification; protein ubiquitination. May act as a substrate-specific adapter of an E3 ubiquitin-protein ligase complex (CUL3-RBX1-BTB) which mediates the ubiquitination and subsequent proteasomal degradation of target proteins. The sequence is that of BTB/POZ domain-containing protein At5g17580 from Arabidopsis thaliana (Mouse-ear cress).